Here is a 324-residue protein sequence, read N- to C-terminus: Glutathione synthetase (324 aa).

Positions 133–317 constitute an ATP-grasp domain; that stretch reads KMYALQFTKA…LAHQVIQWVE (185 aa). 159 to 215 contacts ATP; sequence VEAKGATVLKPLGNKAGEGILFLQAGDRNFNSIVELSTQQGRLPVMVQTYLPEAKEG. Mg(2+) contacts are provided by Glu-288 and Asn-290.

Belongs to the prokaryotic GSH synthase family. Mg(2+) is required as a cofactor. It depends on Mn(2+) as a cofactor.

It carries out the reaction gamma-L-glutamyl-L-cysteine + glycine + ATP = glutathione + ADP + phosphate + H(+). It functions in the pathway sulfur metabolism; glutathione biosynthesis; glutathione from L-cysteine and L-glutamate: step 2/2. The sequence is that of Glutathione synthetase from Nostoc sp. (strain PCC 7120 / SAG 25.82 / UTEX 2576).